A 345-amino-acid polypeptide reads, in one-letter code: Probable fructokinase-3 (345 aa).

The protein belongs to the carbohydrate kinase PfkB family.

The enzyme catalyses D-fructose + ATP = D-fructose 6-phosphate + ADP + H(+). The protein operates within glycan biosynthesis; starch biosynthesis. Its function is as follows. May play an important role in maintaining the flux of carbon towards starch formation. This chain is Probable fructokinase-3, found in Arabidopsis thaliana (Mouse-ear cress).